The sequence spans 149 residues: Protein DOWN-REGULATED IN DIF1 11 (149 aa).

The signal sequence occupies residues 1–22 (MEKAILITFLIATTSMVYQTIG).

Mostly expressed in embryo sac cells. Restricted to synergid cells, especially in the filiform apparatus of mature female gametophyte, via MYB98-mediated transcription regulation. Also detected at low levels in egg and central cells.

This is Protein DOWN-REGULATED IN DIF1 11 from Arabidopsis thaliana (Mouse-ear cress).